Here is a 202-residue protein sequence, read N- to C-terminus: ATP-dependent Clp protease proteolytic subunit 1 (202 aa).

The active-site Nucleophile is Ser-101. His-126 is an active-site residue.

The protein belongs to the peptidase S14 family. In terms of assembly, fourteen ClpP subunits assemble into 2 heptameric rings which stack back to back to give a disk-like structure with a central cavity, resembling the structure of eukaryotic proteasomes.

Its subcellular location is the cytoplasm. It carries out the reaction Hydrolysis of proteins to small peptides in the presence of ATP and magnesium. alpha-casein is the usual test substrate. In the absence of ATP, only oligopeptides shorter than five residues are hydrolyzed (such as succinyl-Leu-Tyr-|-NHMec, and Leu-Tyr-Leu-|-Tyr-Trp, in which cleavage of the -Tyr-|-Leu- and -Tyr-|-Trp bonds also occurs).. Functionally, cleaves peptides in various proteins in a process that requires ATP hydrolysis. Has a chymotrypsin-like activity. Plays a major role in the degradation of misfolded proteins. This chain is ATP-dependent Clp protease proteolytic subunit 1, found in Rhizobium etli (strain ATCC 51251 / DSM 11541 / JCM 21823 / NBRC 15573 / CFN 42).